The following is a 424-amino-acid chain: Serine--tRNA ligase (424 aa).

Residue 231–233 coordinates L-serine; it reads TAE. An ATP-binding site is contributed by 262–264; that stretch reads RSE. E285 is a binding site for L-serine. 349 to 352 provides a ligand contact to ATP; that stretch reads EISS. S385 provides a ligand contact to L-serine.

Belongs to the class-II aminoacyl-tRNA synthetase family. Type-1 seryl-tRNA synthetase subfamily. In terms of assembly, homodimer. The tRNA molecule binds across the dimer.

Its subcellular location is the cytoplasm. It catalyses the reaction tRNA(Ser) + L-serine + ATP = L-seryl-tRNA(Ser) + AMP + diphosphate + H(+). It carries out the reaction tRNA(Sec) + L-serine + ATP = L-seryl-tRNA(Sec) + AMP + diphosphate + H(+). It functions in the pathway aminoacyl-tRNA biosynthesis; selenocysteinyl-tRNA(Sec) biosynthesis; L-seryl-tRNA(Sec) from L-serine and tRNA(Sec): step 1/1. Catalyzes the attachment of serine to tRNA(Ser). Is also able to aminoacylate tRNA(Sec) with serine, to form the misacylated tRNA L-seryl-tRNA(Sec), which will be further converted into selenocysteinyl-tRNA(Sec). The protein is Serine--tRNA ligase of Bacillus cereus (strain B4264).